The primary structure comprises 1040 residues: Contactin-2 (1040 aa).

Positions 1–30 are cleaved as a signal peptide; sequence MGAPARKRASLLLLLLATMALVSSPGWSFS. Ig-like C2-type domains are found at residues 39–130, 135–224, 241–324, 329–413, 419–506, and 511–605; these read PVFE…AVLR, QEFS…SVFS, PSIK…GRII, PEWL…AELA, PDFR…GILS, and TKIT…ATVL. Cystine bridges form between Cys63/Cys113, Cys157/Cys209, Cys263/Cys308, and Cys350/Cys397. Residues Asn78, Asn200, and Asn206 are each glycosylated (N-linked (GlcNAc...) asparagine). Asn463, Asn479, Asn500, and Asn527 each carry an N-linked (GlcNAc...) asparagine glycan. Fibronectin type-III domains lie at 612–710, 715–812, 817–913, and 917–1008; these read PPGG…TKEA, APSG…SAEE, APAK…MKPP, and PPGN…NGGT. Asn777 carries N-linked (GlcNAc...) asparagine glycosylation. A Cell attachment site motif is present at residues 796–798; sequence RGD. N-linked (GlcNAc...) asparagine glycans are attached at residues Asn832, Asn920, and Asn942. Positions 897 to 922 are disordered; it reads GTGPASPSADAMTMKPPPRRPPGNIS. The GPI-anchor amidated serine moiety is linked to residue Ser1014. A propeptide spans 1015 to 1040 (removed in mature form); sequence SAVRPAHPGPVFSCMVILMLAGCQRL.

It belongs to the immunoglobulin superfamily. Contactin family.

The protein localises to the cell membrane. Its function is as follows. In conjunction with another transmembrane protein, CNTNAP2, contributes to the organization of axonal domains at nodes of Ranvier by maintaining voltage-gated potassium channels at the juxtaparanodal region. This Mus musculus (Mouse) protein is Contactin-2 (Cntn2).